A 716-amino-acid chain; its full sequence is Mitogen-activated protein kinase kinase kinase 5 (716 aa).

The segment covering 1 to 27 (MRWLPQISFSSPSSSPSSSLKPVASYS) has biased composition (low complexity). Disordered regions lie at residues 1 to 42 (MRWL…DRFH), 74 to 98 (ASTS…VPRS), 119 to 180 (AANA…YWVN), and 238 to 302 (YDIT…VTNG). Residues 31–40 (DPDRNQDRDR) show a composition bias toward basic and acidic residues. Positions 75–91 (STSSSTFDSGLTRSPSA) are enriched in polar residues. Over residues 124–137 (GLDDRDRDPERLIS) the composition is skewed to basic and acidic residues. Composition is skewed to polar residues over residues 138–150 (DRTS…TSVN), 162–173 (ENSSYQDFSPRN), and 242–251 (AFSTDNSPIH). Over residues 263–273 (RSPQPSRPSSP) the composition is skewed to low complexity. Positions 346–607 (WKKGKLIGRG…ASMLLEHRFL (262 aa)) constitute a Protein kinase domain. Residues 352-360 (IGRGTFGSV) and Lys-375 each bind ATP. Asp-472 (proton acceptor) is an active-site residue. The segment covering 610 to 633 (SLQPTSPSNSDVSQLFNGMNITEP) has biased composition (polar residues). Positions 610-716 (SLQPTSPSNS…RRTGVTSDHL (107 aa)) are disordered. Phosphoserine; by PBL27 is present on residues Ser-617 and Ser-622. Positions 634–648 (SSRREKPNFKLDQVP) are enriched in basic and acidic residues. Polar residues-rich tracts occupy residues 652 to 661 (NMTSSESESG) and 674 to 685 (LTGTVNRLSPRS). A phosphoserine; by PBL27 mark is found at Ser-658 and Ser-660. The residue at position 677 (Thr-677) is a Phosphothreonine; by PBL27. At Ser-685 the chain carries Phosphoserine; by PBL27. A compositionally biased stretch (basic and acidic residues) spans 703-716 (SSDRRRTGVTSDHL).

It belongs to the protein kinase superfamily. STE Ser/Thr protein kinase family. MAP kinase kinase kinase subfamily. Interacts with PBL27 at the plasma membrane; disassociation is induced by chitin perception by the CERK1 complex. Interacts with MKK2, MKK4, and MKK5 mainly in the cytosol. Post-translationally, phosphorylated by PBL27 during chitin-mediated signaling in a CERK1-dependent manner. In terms of tissue distribution, mostly expressed in flower buds. Also present in pollen, roots, leaves and seedlings, and, at low levels, in stems and immature siliques.

Its subcellular location is the cell membrane. The protein resides in the cytoplasm. It localises to the cytosol. It carries out the reaction L-seryl-[protein] + ATP = O-phospho-L-seryl-[protein] + ADP + H(+). The enzyme catalyses L-threonyl-[protein] + ATP = O-phospho-L-threonyl-[protein] + ADP + H(+). Functionally, mitogen-activated protein kinase (MAPK) involved in the transduction of signal between the host cell surface chitin receptor complex CERK1-LYK5 and the intracellular MAPK cascade that leads to chitin-induced immunity. Phosphorylates and activates MAPK targets (e.g. MKK4, MKK5, and possibly MKK2) when phosphorylated by PBL27 after elicitation by chitin. Required for resistance to the fungus A.brassicicola. This Arabidopsis thaliana (Mouse-ear cress) protein is Mitogen-activated protein kinase kinase kinase 5.